A 359-amino-acid chain; its full sequence is 3-dehydroquinate synthase (359 aa).

NAD(+)-binding positions include 69-74 (DGEQHK), 103-107 (GVIGD), 127-128 (TT), Lys140, Lys149, and 167-170 (TLDT). Zn(2+)-binding residues include Glu182, His245, and His262.

This sequence belongs to the sugar phosphate cyclases superfamily. Dehydroquinate synthase family. The cofactor is Co(2+). Requires Zn(2+) as cofactor. NAD(+) is required as a cofactor.

It is found in the cytoplasm. It carries out the reaction 7-phospho-2-dehydro-3-deoxy-D-arabino-heptonate = 3-dehydroquinate + phosphate. The protein operates within metabolic intermediate biosynthesis; chorismate biosynthesis; chorismate from D-erythrose 4-phosphate and phosphoenolpyruvate: step 2/7. Catalyzes the conversion of 3-deoxy-D-arabino-heptulosonate 7-phosphate (DAHP) to dehydroquinate (DHQ). The chain is 3-dehydroquinate synthase from Nitrosococcus oceani (strain ATCC 19707 / BCRC 17464 / JCM 30415 / NCIMB 11848 / C-107).